A 90-amino-acid chain; its full sequence is Probable Fe(2+)-trafficking protein (90 aa).

Belongs to the Fe(2+)-trafficking protein family.

Could be a mediator in iron transactions between iron acquisition and iron-requiring processes, such as synthesis and/or repair of Fe-S clusters in biosynthetic enzymes. In Pseudomonas putida (strain ATCC 700007 / DSM 6899 / JCM 31910 / BCRC 17059 / LMG 24140 / F1), this protein is Probable Fe(2+)-trafficking protein.